Reading from the N-terminus, the 438-residue chain is MAFRDVLNIEVAAGNGGDGSMSFHRAKYMEKGGPDGGHGGRGGSIILRAIEGVESLERLVGRRKFKAENGRYGEGRLRQGADGQDTYIDVPVGTTAFDEDSGKVIADLVNVGQEKVIAKGGLGGRGNSTFTSSTRQAPRFAELGTPGQKRRVRLELRLIADVGLVGYPNAGKSSLLAALSRANPAIADYPFTTLSPILGVVQREDEQGVSLDERFTMADIPGIIEGASEGKGLGLEFLRHISRTRLLVYVLDVTRNPVEELQQLQAELRAYDPSLLDNVALVALNKVELVEPDLAQMVEDELAEQGLPVLQVSAKEGTGLNTLRETLFQLLPEFELWAQSNALEVEPDTVVDEALQIVFREDAPAKGEGAPERVWEVHGGGFEERIVRFSRYLEDAAEYLGNLFKRQGLYNALRRAGAREGDTVEIGTFRFEYFDDEE.

An Obg domain is found at 1–159 (MAFRDVLNIE…RRVRLELRLI (159 aa)). The region spanning 160–332 (ADVGLVGYPN…LRETLFQLLP (173 aa)) is the OBG-type G domain. ATP contacts are provided by residues 166–173 (GYPNAGKS), 191–195 (FTTLS), 219–222 (DIPG), 285–288 (NKVE), and 313–315 (SAK). Residues S173 and T193 each coordinate Mg(2+). The 79-residue stretch at 357–435 (IVFREDAPAK…IGTFRFEYFD (79 aa)) folds into the OCT domain.

This sequence belongs to the TRAFAC class OBG-HflX-like GTPase superfamily. OBG GTPase family. As to quaternary structure, monomer. Mg(2+) serves as cofactor.

The protein localises to the cytoplasm. Functionally, an essential GTPase which binds GTP, GDP and possibly (p)ppGpp with moderate affinity, with high nucleotide exchange rates and a fairly low GTP hydrolysis rate. Plays a role in control of the cell cycle, stress response, ribosome biogenesis and in those bacteria that undergo differentiation, in morphogenesis control. This chain is GTPase Obg, found in Deinococcus radiodurans (strain ATCC 13939 / DSM 20539 / JCM 16871 / CCUG 27074 / LMG 4051 / NBRC 15346 / NCIMB 9279 / VKM B-1422 / R1).